The sequence spans 525 residues: Asparagine synthetase domain-containing protein YML096W (525 aa).

Catalysis depends on Cys-2, which acts as the For GATase activity. Residues 2 to 209 enclose the Glutamine amidotransferase type-2 domain; sequence CGILLHYCPN…LNSNQRSHLP (208 aa). An Asparagine synthetase domain is found at 210 to 523; it reads YEVTSEIDLN…GTDLLKENRN (314 aa). Positions 503–525 are disordered; it reads SAKMTKDGNKHGTDLLKENRNCS. Positions 506 to 525 are enriched in basic and acidic residues; the sequence is MTKDGNKHGTDLLKENRNCS.

It localises to the cytoplasm. The sequence is that of Asparagine synthetase domain-containing protein YML096W from Saccharomyces cerevisiae (strain ATCC 204508 / S288c) (Baker's yeast).